We begin with the raw amino-acid sequence, 65 residues long: Large ribosomal subunit protein bL33c (65 aa).

Belongs to the bacterial ribosomal protein bL33 family.

Its subcellular location is the plastid. The protein localises to the chloroplast. This Marchantia polymorpha (Common liverwort) protein is Large ribosomal subunit protein bL33c (rpl33).